The sequence spans 234 residues: Proteasome subunit alpha (234 aa).

It belongs to the peptidase T1A family. The 20S proteasome core is composed of 14 alpha and 14 beta subunits that assemble into four stacked heptameric rings, resulting in a barrel-shaped structure. The two inner rings, each composed of seven catalytic beta subunits, are sandwiched by two outer rings, each composed of seven alpha subunits. The catalytic chamber with the active sites is on the inside of the barrel. Has a gated structure, the ends of the cylinder being occluded by the N-termini of the alpha-subunits. Is capped by the proteasome-associated ATPase, ARC.

It is found in the cytoplasm. It participates in protein degradation; proteasomal Pup-dependent pathway. Its activity is regulated as follows. The formation of the proteasomal ATPase ARC-20S proteasome complex, likely via the docking of the C-termini of ARC into the intersubunit pockets in the alpha-rings, may trigger opening of the gate for substrate entry. Interconversion between the open-gate and close-gate conformations leads to a dynamic regulation of the 20S proteasome proteolysis activity. Its function is as follows. Component of the proteasome core, a large protease complex with broad specificity involved in protein degradation. In Acidothermus cellulolyticus (strain ATCC 43068 / DSM 8971 / 11B), this protein is Proteasome subunit alpha.